A 592-amino-acid polypeptide reads, in one-letter code: ATP-binding protein Uup (592 aa).

ABC transporter domains follow at residues 1–221 (MPLI…RIEK) and 289–516 (FKLK…KSNI). Residues 36 to 43 (GKNGAGKS) and 321 to 328 (GNNGSGKS) each bind ATP. A coiled-coil region spans residues 516-550 (ISFLKTKQNQVKKELKKVLNEIEKIENSIKTLKIQ). The tract at residues 518–592 (FLKTKQNQVK…IYWENLEKKL (75 aa)) is C-terminal domain (CTD), binds DNA.

The protein belongs to the ABC transporter superfamily. ABCF family. Uup subfamily.

It localises to the cytoplasm. It carries out the reaction ATP + H2O = ADP + phosphate + H(+). Functionally, probably plays a role in ribosome assembly or function. May be involved in resolution of branched DNA intermediates that result from template switching in postreplication gaps. Binds DNA and has ATPase activity. This is ATP-binding protein Uup from Buchnera aphidicola subsp. Schizaphis graminum (strain Sg).